We begin with the raw amino-acid sequence, 256 residues long: Small ribosomal subunit protein eS1 (256 aa).

A2 is modified (N-acetylalanine; partial).

It belongs to the eukaryotic ribosomal protein eS1 family. In terms of assembly, component of the small ribosomal subunit. Mature ribosomes consist of a small (40S) and a large (60S) subunit. The 40S subunit contains about 33 different proteins and 1 molecule of RNA (18S). The 60S subunit contains about 49 different proteins and 3 molecules of RNA (25S, 5.8S and 5S).

The protein localises to the cytoplasm. The sequence is that of Small ribosomal subunit protein eS1 (rps1) from Botryotinia fuckeliana (strain B05.10) (Noble rot fungus).